The chain runs to 241 residues: Attacin-C (241 aa).

The N-terminal stretch at 1–21 (MSKIVLLIVVIVGVLGSLAVA) is a signal peptide. Positions 22–23 (LP) are excised as a propeptide. Position 24 is a pyrrolidone carboxylic acid (glutamine 24). O-linked (GalNAc...) threonine glycosylation occurs at threonine 39. Serine 127 carries the phosphoserine modification.

It belongs to the attacin/sarcotoxin-2 family. Hemolymph (at protein level).

Its subcellular location is the secreted. Has antimicrobial activity in synergy with other peptides. Strongest activity observed against E.cloacae. The chain is Attacin-C from Drosophila melanogaster (Fruit fly).